A 95-amino-acid polypeptide reads, in one-letter code: Co-chaperonin GroES (95 aa).

It belongs to the GroES chaperonin family. In terms of assembly, heptamer of 7 subunits arranged in a ring. Interacts with the chaperonin GroEL.

The protein localises to the cytoplasm. Its function is as follows. Together with the chaperonin GroEL, plays an essential role in assisting protein folding. The GroEL-GroES system forms a nano-cage that allows encapsulation of the non-native substrate proteins and provides a physical environment optimized to promote and accelerate protein folding. GroES binds to the apical surface of the GroEL ring, thereby capping the opening of the GroEL channel. This is Co-chaperonin GroES from Ruegeria pomeroyi (strain ATCC 700808 / DSM 15171 / DSS-3) (Silicibacter pomeroyi).